Reading from the N-terminus, the 211-residue chain is Uridine kinase (211 aa).

15 to 22 serves as a coordination point for ATP; that stretch reads GGSGSGKT.

This sequence belongs to the uridine kinase family.

It is found in the cytoplasm. The catalysed reaction is uridine + ATP = UMP + ADP + H(+). The enzyme catalyses cytidine + ATP = CMP + ADP + H(+). It functions in the pathway pyrimidine metabolism; CTP biosynthesis via salvage pathway; CTP from cytidine: step 1/3. The protein operates within pyrimidine metabolism; UMP biosynthesis via salvage pathway; UMP from uridine: step 1/1. This Latilactobacillus sakei subsp. sakei (strain 23K) (Lactobacillus sakei subsp. sakei) protein is Uridine kinase.